A 723-amino-acid chain; its full sequence is MDGNDLVENKCPVMHGGITVAGHSNTAWWPETLNLEILHQHDTKVSPLGKDFNYRDAVKSLDFEALKKDMHDLMTNSQDWWPADYGHYGGLMIRLAWHSAGSYRLADGRGGGNTGNIRFAPLNSWPDNGNLDKARRLLWPIKKKYGNKISWADLILLSGTIAYESMGLKTYGFSFGREDIWAPEKDVYWGAEKEWLAPSDERYTDVDKPETMENPLAAVQMGLIYVNPEGVNGKSDPLKSAAQVRETFARMAMNDEETAALTCGGHTVGKAHGNGDAGKLSPPPEGNDLETQGFGWMNPNMDGKATNAVTSGIEGAWTTHPTKWDMGYFHLLFGYEWELTKSPAGASQWRPINIKEEDMPVDPTDPTKRVMPMMTDADMAMKMDPAYNAICQKFMADQAYFSDTFARAWFKLTHRDLGPRVRYIGPDAPQEDLIWQDPVPAGSKSYDVAAVKAKIADSGLSLSEMVSTAWDSARTFRGSDLRGGANGARIRLAPQKDWAGNEPARLQKVLSVLEPIASATGASVADVIVLAGNVGVEQAAKAAGFDISVPFSPGRGDATAEMTDADSFESLEPYADGFRNWQKEDYVVKPEELLLDRAQLLGLTGPEMTVLLGGMRVMGTNHGGTKHGVFTDKVGALTNDFFVNLTDMANKWVPRGKNAYDITDRKSGAVKFTATRADLVFGSNSILRAYAEIYAQDDAKEKFVKDFVAAWSKVMDADRFDLA.

The signal sequence occupies residues 1 to 29; sequence MDGNDLVENKCPVMHGGITVAGHSNTAWW. A cross-link (tryptophyl-tyrosyl-methioninium (Trp-Tyr) (with M-251)) is located at residues 97–225; the sequence is WHSAGSYRLA…LAAVQMGLIY (129 aa). The Proton acceptor role is filled by H98. The segment at residues 225–251 is a cross-link (tryptophyl-tyrosyl-methioninium (Tyr-Met) (with W-97)); the sequence is YVNPEGVNGKSDPLKSAAQVRETFARM. H266 serves as a coordination point for heme b.

This sequence belongs to the peroxidase family. Peroxidase/catalase subfamily. As to quaternary structure, homodimer or homotetramer. It depends on heme b as a cofactor. In terms of processing, formation of the three residue Trp-Tyr-Met cross-link is important for the catalase, but not the peroxidase activity of the enzyme.

It catalyses the reaction H2O2 + AH2 = A + 2 H2O. The enzyme catalyses 2 H2O2 = O2 + 2 H2O. Functionally, bifunctional enzyme with both catalase and broad-spectrum peroxidase activity. The polypeptide is Catalase-peroxidase (Hyphomonas neptunium (strain ATCC 15444)).